A 169-amino-acid chain; its full sequence is Crossover junction endodeoxyribonuclease RuvC (169 aa).

Residues D11, E71, and D143 contribute to the active site. The Mg(2+) site is built by D11, E71, and D143.

The protein belongs to the RuvC family. Homodimer which binds Holliday junction (HJ) DNA. The HJ becomes 2-fold symmetrical on binding to RuvC with unstacked arms; it has a different conformation from HJ DNA in complex with RuvA. In the full resolvosome a probable DNA-RuvA(4)-RuvB(12)-RuvC(2) complex forms which resolves the HJ. Mg(2+) serves as cofactor.

It localises to the cytoplasm. It carries out the reaction Endonucleolytic cleavage at a junction such as a reciprocal single-stranded crossover between two homologous DNA duplexes (Holliday junction).. In terms of biological role, the RuvA-RuvB-RuvC complex processes Holliday junction (HJ) DNA during genetic recombination and DNA repair. Endonuclease that resolves HJ intermediates. Cleaves cruciform DNA by making single-stranded nicks across the HJ at symmetrical positions within the homologous arms, yielding a 5'-phosphate and a 3'-hydroxyl group; requires a central core of homology in the junction. The consensus cleavage sequence is 5'-(A/T)TT(C/G)-3'. Cleavage occurs on the 3'-side of the TT dinucleotide at the point of strand exchange. HJ branch migration catalyzed by RuvA-RuvB allows RuvC to scan DNA until it finds its consensus sequence, where it cleaves and resolves the cruciform DNA. This Rhizobium johnstonii (strain DSM 114642 / LMG 32736 / 3841) (Rhizobium leguminosarum bv. viciae) protein is Crossover junction endodeoxyribonuclease RuvC.